The chain runs to 541 residues: Synaptotagmin-1 (541 aa).

Residues 1 to 11 (MGFFSTILGFC) lie on the Extracellular side of the membrane. The helical transmembrane segment at 12 to 32 (GFGVGISLGLVIGYVLFVYLL) threads the bilayer. The Cytoplasmic portion of the chain corresponds to 33–541 (PNDVKDPEIR…QIELEWRTAS (509 aa)). In terms of domain architecture, SMP-LTD spans 67-249 (DFDRVDWINR…WPKTLVVPIL (183 aa)). Residues 227-509 (QEQIKDQVAN…TLGYVDIPVV (283 aa)) are phospholipid binding. 2 consecutive C2 domains span residues 240–362 (WPKT…AFTL) and 401–521 (GFEE…NQKF). Ca(2+) is bound by residues Asp276, Asp282, Asp332, and Glu334.

This sequence belongs to the synaptotagmin family. As to quaternary structure, interacts with cabbage leaf curl virus (CaLCuV) BC1 protein and tobacco mosaic virus (TMV) MP protein. Interacts with ROSY1. Requires Ca(2+) as cofactor. Expressed in roots, shoots, rosette and cauline leaves, inflorescences, and siliques. In roots, expressed in vascular bundle, epidermis, the differential zone of the tips of root hairs, and the quiescent center and columella of root tips.

It localises to the cell membrane. The protein localises to the endosome membrane. Functionally, plays an important role in maintaining plasma membrane integrity during freezing and osmotic stresses. May function in membrane resealing during calcium-dependent freezing tolerance. May regulate endocytosis and endosome recycling at the plasma membrane and cell-to-cell trafficking of cabbage leaf curl virus (CaLCuV) and tobacco mosaic virus (TMV) movement proteins via plasmodesmata. In Arabidopsis thaliana (Mouse-ear cress), this protein is Synaptotagmin-1 (SYT1).